An 89-amino-acid chain; its full sequence is Neurotoxin beta-KTx 52.1 (89 aa).

A signal peptide spans 1–20; it reads MKQYIFFLALIVLTATFAEA. Positions 21–39 are excised as a propeptide; sequence GKKTEILDKVKKVFSKAKD. Residues 53-89 form the BetaSPN-type CS-alpha/beta domain; sequence ELGCPFIDKWCEDHCDSKKLVGKCENFDCSCVKLGGK. Intrachain disulfides connect C56–C76, C63–C81, and C67–C83.

Belongs to the long chain scorpion toxin family. Class 2 subfamily. In terms of tissue distribution, expressed by the venom gland.

It is found in the secreted. Inhibits voltage-gated potassium channel. The protein is Neurotoxin beta-KTx 52.1 of Lychas mucronatus (Chinese swimming scorpion).